Consider the following 428-residue polypeptide: Adenylosuccinate synthetase (428 aa).

GTP-binding positions include 12 to 18 and 40 to 42; these read GDEGKGK and GHS. Asp13 serves as the catalytic Proton acceptor. Positions 13 and 40 each coordinate Mg(2+). IMP contacts are provided by residues 13-16, 38-41, Thr128, Arg142, Gln223, Thr238, and Arg302; these read DEGK and NAGH. Residue His41 is the Proton donor of the active site. Residue 298 to 304 participates in substrate binding; it reads VTTGRPR. GTP contacts are provided by residues Arg304, 330-332, and 412-414; these read KLD and GTG.

It belongs to the adenylosuccinate synthetase family. Homodimer. It depends on Mg(2+) as a cofactor.

It localises to the cytoplasm. The catalysed reaction is IMP + L-aspartate + GTP = N(6)-(1,2-dicarboxyethyl)-AMP + GDP + phosphate + 2 H(+). It participates in purine metabolism; AMP biosynthesis via de novo pathway; AMP from IMP: step 1/2. Functionally, plays an important role in the de novo pathway of purine nucleotide biosynthesis. Catalyzes the first committed step in the biosynthesis of AMP from IMP. This chain is Adenylosuccinate synthetase, found in Bifidobacterium longum subsp. infantis (strain ATCC 15697 / DSM 20088 / JCM 1222 / NCTC 11817 / S12).